Here is a 263-residue protein sequence, read N- to C-terminus: Gap junction beta-6 protein (263 aa).

At 1–19 (MDWGALQTILGGVNKHSTS) the chain is on the cytoplasmic side. Residues 20-40 (IGKIWLTVLFIFRIMILVVAA) traverse the membrane as a helical segment. The Extracellular portion of the chain corresponds to 41–75 (ERVWGDEQDDFICNTLQPGCKNVCYDHFFPISHIR). The chain crosses the membrane as a helical span at residues 76–96 (LWALQLIFVSTPALLVAMHVA). Topologically, residues 97–137 (YRRHEKKRQFRKGDQKCEYKDIEEIRTQRFRIEGTLWWTYT) are cytoplasmic. A helical transmembrane segment spans residues 138 to 158 (CSIFFRLVFEAVFMYAFYFMY). The Extracellular portion of the chain corresponds to 159–189 (DGFRMPRLMKCSAWPCPNTVDCFVSRPTEKT). The helical transmembrane segment at 190–210 (VFTIFMIAVSSICILLNVAEL) threads the bilayer. Topologically, residues 211–263 (CYLLTKFFLRRSRKAGNQKHHPNHENKEETKQNEMNELISDSCQNTVIGFTSS) are cytoplasmic.

Belongs to the connexin family. Beta-type (group I) subfamily. A connexon is composed of a hexamer of connexins. Exclusively expressed in the cochlea of the inner ear, where it is found in cells of the tegmentum vasculosum, cuboidal cells, supporting cells and clear cells.

Its subcellular location is the cell membrane. It is found in the cell junction. The protein resides in the gap junction. Functionally, one gap junction consists of a cluster of closely packed pairs of transmembrane channels, the connexons, through which materials of low MW diffuse from one cell to a neighboring cell. This is Gap junction beta-6 protein (GJB6) from Gallus gallus (Chicken).